A 20-amino-acid chain; its full sequence is GPNGKSQSIIVGPWGDRVTN.

The tract at residues Gly1 to Asn20 is disordered.

It belongs to the jacalin lectin family. In terms of assembly, formed of four alpha chains and four beta chains.

Functionally, D-galactose-specific lectin, binds the T-antigen structure Gal-beta1,3-GalNAc. The chain is Agglutinin beta-3 chain from Maclura pomifera (Osage orange).